The chain runs to 389 residues: Sulfate adenylyltransferase (389 aa).

It belongs to the sulfate adenylyltransferase family.

The enzyme catalyses sulfate + ATP + H(+) = adenosine 5'-phosphosulfate + diphosphate. The protein operates within sulfur metabolism; hydrogen sulfide biosynthesis; sulfite from sulfate: step 1/3. The protein is Sulfate adenylyltransferase of Deinococcus deserti (strain DSM 17065 / CIP 109153 / LMG 22923 / VCD115).